The sequence spans 276 residues: tRNA (guanine-N(7)-)-methyltransferase (276 aa).

The interval 1 to 36 (MAAETRNVAGAEAPPPQKRYYRQRAHSNPMADHTLR) is disordered. N-acetylalanine is present on Ala-2. Position 27 is a phosphoserine; by PKB/AKT1 and RPS6KA3 (Ser-27). S-adenosyl-L-homocysteine is bound by residues Gly-84, Glu-107, Ile-108, Arg-109, Asn-140, Ala-141, and Leu-160. S-adenosyl-L-methionine-binding residues include Gly-84 and Glu-107. Residues Arg-109, Asn-140, Ala-141, and Leu-160 each coordinate S-adenosyl-L-methionine. Residue Asp-163 is part of the active site. Positions 164–172 (PHFKRTKHK) are alphaC helix. Residues Thr-238 and Glu-240 each contribute to the S-adenosyl-L-homocysteine site. Residues Thr-238 and Glu-240 each contribute to the S-adenosyl-L-methionine site. The interval 238–246 (TEEGKKVLR) is alpha6 helix.

This sequence belongs to the class I-like SAM-binding methyltransferase superfamily. TrmB family. In terms of assembly, catalytic component of the METTL1-WDR4 complex, composed of METTL1 and WDR4. Phosphorylation at Ser-27 by PKB/AKT1 inactivates its methyltransferase activity via a steric interference mechanism in the active site that locally disrupts the catalytic center. Phosphorylation at Ser-27 does not affect the interaction with WDR4. Ubiquitous.

The protein resides in the nucleus. The catalysed reaction is guanosine(46) in tRNA + S-adenosyl-L-methionine = N(7)-methylguanosine(46) in tRNA + S-adenosyl-L-homocysteine. It catalyses the reaction a guanosine in mRNA + S-adenosyl-L-methionine = an N(7)-methylguanosine in mRNA + S-adenosyl-L-homocysteine. The enzyme catalyses a guanosine in miRNA + S-adenosyl-L-methionine = an N(7)-methylguanosine in miRNA + S-adenosyl-L-homocysteine. Its pathway is tRNA modification; N(7)-methylguanine-tRNA biosynthesis. Catalytic component of METTL1-WDR4 methyltransferase complex that mediates the formation of N(7)-methylguanine in a subset of RNA species, such as tRNAs, mRNAs and microRNAs (miRNAs). Catalyzes the formation of N(7)-methylguanine at position 46 (m7G46) in a large subset of tRNAs that contain the 5'-RAGGU-3' motif within the variable loop. M7G46 interacts with C13-G22 in the D-loop to stabilize tRNA tertiary structure and protect tRNAs from decay. Also acts as a methyltransferase for a subset of internal N(7)-methylguanine in mRNAs. Internal N(7)-methylguanine methylation of mRNAs in response to stress promotes their relocalization to stress granules, thereby suppressing their translation. Also methylates a specific subset of miRNAs, such as let-7. N(7)-methylguanine methylation of let-7 miRNA promotes let-7 miRNA processing by disrupting an inhibitory secondary structure within the primary miRNA transcript (pri-miRNA). Acts as a regulator of embryonic stem cell self-renewal and differentiation. This is tRNA (guanine-N(7)-)-methyltransferase from Homo sapiens (Human).